The primary structure comprises 196 residues: Sulfur-rich protein (196 aa).

Transmembrane regions (helical) follow at residues 34 to 54 (VTAGLQAITSSPGMVNLLIGW), 76 to 96 (ITLLVLGILLVVAGLACMFIF), and 105 to 125 (FWLIIPAAIGLIKLLVTSLCF).

It localises to the membrane. The sequence is that of Sulfur-rich protein (srp) from Chlamydia pneumoniae (Chlamydophila pneumoniae).